The sequence spans 124 residues: Small ribosomal subunit protein bS6 (124 aa).

A disordered region spans residues 96 to 124 (ETAPSPMMKEVQREEARKAAQTTTEGQAA). Polar residues predominate over residues 115-124 (AQTTTEGQAA).

This sequence belongs to the bacterial ribosomal protein bS6 family.

Functionally, binds together with bS18 to 16S ribosomal RNA. The polypeptide is Small ribosomal subunit protein bS6 (Cupriavidus necator (strain ATCC 17699 / DSM 428 / KCTC 22496 / NCIMB 10442 / H16 / Stanier 337) (Ralstonia eutropha)).